Reading from the N-terminus, the 701-residue chain is CRS2-associated factor 1, chloroplastic (701 aa).

The N-terminal 37 residues, 1-37 (MSLKLNTPFPIFAPSLFPNHNPRAPSEIRFSRWGNAN), are a transit peptide targeting the chloroplast. 2 disordered regions span residues 68 to 136 (VHTH…PEVK) and 191 to 221 (LPQSQKTPREFDSFRLPPVGKKGLKPVQKPG). CRM domains are found at residues 241–337 (EPLT…TRPR) and 359–455 (EGLT…LTTP). The segment at 471–532 (LPEDDEPSVS…SLQSWSTKDV (62 aa)) is disordered. 2 stretches are compositionally biased toward polar residues: residues 479–492 (VSPNQSQTMTQNPP) and 520–530 (TINSLQSWSTK). A CRS2 binding region spans residues 564–586 (RVLILMKQAVESGTALVLDAADL).

Interacts with CRS2 and RNA. Part of large ribonucleo-protein complexes that include group IIB introns, CRS2 and CAF1.

It is found in the plastid. The protein resides in the chloroplast stroma. Its function is as follows. Required for the splicing of group IIB introns in chloroplasts. Forms splicing particles with CRS2. Interacts with RNA and confers intron specificity of the splicing particles. In Arabidopsis thaliana (Mouse-ear cress), this protein is CRS2-associated factor 1, chloroplastic.